The primary structure comprises 223 residues: AMSH-like ubiquitin thioesterase 2 (223 aa).

The region spanning 49–177 (VHISERLLED…YGIFKLTDPG (129 aa)) is the MPN domain. Zn(2+) contacts are provided by H127, H129, D140, H142, C185, H191, and H193. A JAMM motif motif is present at residues 127–140 (HTHPSQGCFMSSVD).

Belongs to the peptidase M67C family. Zn(2+) is required as a cofactor.

Zinc metalloprotease that cleaves 'Lys-48'- and 'Lys-63'-linked polyubiquitin chains. This chain is AMSH-like ubiquitin thioesterase 2 (AMSH2), found in Arabidopsis thaliana (Mouse-ear cress).